The sequence spans 257 residues: ECF RNA polymerase sigma factor SigE (257 aa).

Residues 87–153 (MPSWDELVRQ…RITTNLFLDM (67 aa)) form a sigma-70 factor domain-2 region. Positions 111–114 (NQHD) match the Polymerase core binding motif. Residues 186–236 (SRLGADLQAALDSLPPEFRAAVVLCDIEGLSYEEIGATLGVKLGTVRSRIH) form a sigma-70 factor domain-4 region. A DNA-binding region (H-T-H motif) is located at residues 211–230 (DIEGLSYEEIGATLGVKLGT).

This sequence belongs to the sigma-70 factor family. ECF subfamily. As to quaternary structure, interacts transiently with the RNA polymerase catalytic core formed by RpoA, RpoB, RpoC and RpoZ (2 alpha, 1 beta, 1 beta' and 1 omega subunit) to form the RNA polymerase holoenzyme that can initiate transcription. Interacts (via sigma-70 factor domain 4) with RseA; interaction is abrogated by treatment of cells with H(2)O(2) or detergent.

In terms of biological role, sigma factors are initiation factors that promote the attachment of RNA polymerase to specific initiation sites and are then released. Extracytoplasmic function (ECF) sigma factors are held in an inactive form by an anti-sigma factor until released. This is ECF RNA polymerase sigma factor SigE (sigE) from Mycolicibacterium smegmatis (strain ATCC 700084 / mc(2)155) (Mycobacterium smegmatis).